The chain runs to 312 residues: E3 ubiquitin-protein ligase RNF126-B (312 aa).

The Zn(2+) site is built by cysteine 13, cysteine 16, cysteine 29, and cysteine 32. A C4-type zinc finger spans residues 13–32 (CHSCTAEITPRLPEYTCPRC). Disordered stretches follow at residues 41–63 (PETS…NRPS) and 96–139 (GTSG…RNEG). Over residues 44–55 (SRNSESNSSNNS) the composition is skewed to low complexity. Over residues 102-115 (EETRDGESRREHQS) the composition is skewed to basic and acidic residues. Positions 124–134 (PRARMSTRRGA) are enriched in basic residues. Residues 228 to 269 (CPVCKEDYTVGESVRQLPCNHLFHNDCIIPWLEQHDTCPVCR) form an RING-type zinc finger. A disordered region spans residues 275–312 (QNTATNPPGLTDMTFSSSSTSSSSSTSPTDENNTANNS). Low complexity predominate over residues 290–301 (SSSSTSSSSSTS). Over residues 302-312 (PTDENNTANNS) the composition is skewed to polar residues.

The protein localises to the cytoplasm. It is found in the nucleus. The catalysed reaction is S-ubiquitinyl-[E2 ubiquitin-conjugating enzyme]-L-cysteine + [acceptor protein]-L-lysine = [E2 ubiquitin-conjugating enzyme]-L-cysteine + N(6)-ubiquitinyl-[acceptor protein]-L-lysine.. It functions in the pathway protein modification; protein ubiquitination. E3 ubiquitin-protein ligase that mediates ubiquitination oF target proteins. Depending on the associated E2 ligase, mediates 'Lys-27'-, 'Lys-29'-, 'Lys-48'- and/or 'Lys-63'-linked polyubiquitination of substrates. Part of a BAG6-dependent quality control process ensuring that proteins of the secretory pathway that are mislocalized to the cytosol are degraded by the proteasome. Probably acts by providing the ubiquitin ligase activity associated with the BAG6 complex and be responsible for ubiquitination of the hydrophobic mislocalized proteins and their targeting to the proteasome. The sequence is that of E3 ubiquitin-protein ligase RNF126-B from Xenopus laevis (African clawed frog).